Reading from the N-terminus, the 94-residue chain is Large ribosomal subunit protein bL25 (94 aa).

The protein belongs to the bacterial ribosomal protein bL25 family. As to quaternary structure, part of the 50S ribosomal subunit; part of the 5S rRNA/L5/L18/L25 subcomplex. Contacts the 5S rRNA. Binds to the 5S rRNA independently of L5 and L18.

In terms of biological role, this is one of the proteins that binds to the 5S RNA in the ribosome where it forms part of the central protuberance. In Escherichia coli (strain K12 / DH10B), this protein is Large ribosomal subunit protein bL25.